A 109-amino-acid chain; its full sequence is ATPase inhibitor mai-2, mitochondrial (109 aa).

Disordered regions lie at residues 17–39 (RFST…SIRD) and 73–95 (QEVD…HQKR). Residues 21–35 (GGHGDGAGRGGGSGG) are compositionally biased toward gly residues. A coiled-coil region spans residues 45–109 (GKMEAAREDE…EAEERALGKE (65 aa)).

Belongs to the ATPase inhibitor family.

It is found in the mitochondrion. Functionally, thought to be a regulatory component of the ATP-synthesizing complex in the mitochondria. The protein is ATPase inhibitor mai-2, mitochondrial of Caenorhabditis briggsae.